The chain runs to 81 residues: Sulfur carrier protein TusA (81 aa).

The active-site Cysteine persulfide intermediate is the Cys-19.

This sequence belongs to the sulfur carrier protein TusA family. In terms of assembly, interacts with IscS.

The protein localises to the cytoplasm. Its pathway is tRNA modification. Its function is as follows. Sulfur carrier protein involved in sulfur trafficking in the cell. Part of a sulfur-relay system required for 2-thiolation during synthesis of 2-thiouridine of the modified wobble base 5-methylaminomethyl-2-thiouridine (mnm(5)s(2)U) in tRNA. Interacts with IscS and stimulates its cysteine desulfurase activity. Accepts an activated sulfur from IscS, which is then transferred to TusD, and thus determines the direction of sulfur flow from IscS to 2-thiouridine formation. Also appears to be involved in sulfur transfer for the biosynthesis of molybdopterin. The sequence is that of Sulfur carrier protein TusA from Serratia proteamaculans (strain 568).